The primary structure comprises 341 residues: MTERKRNLRPVRDVAPPTLQFRTVHGYRRAFRIAGSGPAILLIHGIGDNSTTWNGVHAKLAQRFTVIAPDLLGHGQSDKPRADYSVAAYANGMRDLLSVLDIERVTIVGHSLGGGVAMQFAYQFPQLVDRLILVSAGGVTKDVNIVFRLASLPMGSEAMALLRLPLVLPAVQIAGRIVGKAIGTTSLGHDLPNVLRILDDLPEPTASAAFGRTLRAVVDWRGQMVTMLDRCYLTEAIPVQIIWGTKDVVLPVRHAHMAHAAMPGSQLEIFEGSGHFPFHDDPARFIDIVERFMDTTEPAEYDQAALRALLRRGGGEATVTGSADTRVAVLNAIGSNERSAT.

Catalysis depends on residues S111, D247, and H275.

This sequence belongs to the DmpD/TodF/XylF esterase family.

This is an uncharacterized protein from Mycobacterium bovis (strain ATCC BAA-935 / AF2122/97).